The chain runs to 325 residues: uncharacterized protein (325 aa).

The 103-residue stretch at 49-151 folds into the HD domain; that stretch reads RYEHSIGVML…ELCADRTDYT (103 aa).

This is an uncharacterized protein from Bacillus subtilis (strain 168).